Here is a 361-residue protein sequence, read N- to C-terminus: 3-dehydroquinate synthase (361 aa).

NAD(+) is bound by residues 106-110, 130-131, Lys-143, and Lys-152; these read GVVGD and TT. Residues Glu-185, His-248, and His-265 each coordinate Zn(2+).

It belongs to the sugar phosphate cyclases superfamily. Dehydroquinate synthase family. The cofactor is NAD(+). Requires Co(2+) as cofactor. Zn(2+) is required as a cofactor.

The protein resides in the cytoplasm. The enzyme catalyses 7-phospho-2-dehydro-3-deoxy-D-arabino-heptonate = 3-dehydroquinate + phosphate. It participates in metabolic intermediate biosynthesis; chorismate biosynthesis; chorismate from D-erythrose 4-phosphate and phosphoenolpyruvate: step 2/7. Catalyzes the conversion of 3-deoxy-D-arabino-heptulosonate 7-phosphate (DAHP) to dehydroquinate (DHQ). In Leptospira interrogans serogroup Icterohaemorrhagiae serovar copenhageni (strain Fiocruz L1-130), this protein is 3-dehydroquinate synthase.